Reading from the N-terminus, the 400-residue chain is Arrestin, lateral eye (400 aa).

Belongs to the arrestin family. Phosphorylated.

Plays an important role in the photoreceptor transduction. This chain is Arrestin, lateral eye, found in Limulus polyphemus (Atlantic horseshoe crab).